Here is a 493-residue protein sequence, read N- to C-terminus: Lysine--tRNA ligase (493 aa).

Positions 400 and 407 each coordinate Mg(2+).

The protein belongs to the class-II aminoacyl-tRNA synthetase family. In terms of assembly, homodimer. Requires Mg(2+) as cofactor.

The protein localises to the cytoplasm. It carries out the reaction tRNA(Lys) + L-lysine + ATP = L-lysyl-tRNA(Lys) + AMP + diphosphate. The chain is Lysine--tRNA ligase from Syntrophomonas wolfei subsp. wolfei (strain DSM 2245B / Goettingen).